The sequence spans 302 residues: Vacuolar protein sorting-associated protein 26A (302 aa).

This sequence belongs to the VPS26 family. As to quaternary structure, component of the retromer complex which consists of VPS29 (MAG1), VPS26 (VPS26A or VPS26B), VPS35 (VPS35A or VPS35B or VPS35C), VPS5/17 (SNX1 or SNX2A or SNX2B). Component of a retromer subcomplex consisting of VPS29 (MAG1), VPS26 (VPS26A or VPS26B), VPS35 (VPS35A or VPS35B or VPS35C).

The protein resides in the cytoplasm. It is found in the endosome membrane. Its subcellular location is the prevacuolar compartment membrane. The protein localises to the golgi apparatus. It localises to the trans-Golgi network membrane. Functionally, plays a role in vesicular protein sorting. Component of the membrane-associated retromer complex which is essential in endosome-to-Golgi retrograde transport. The VPS29-VPS26-VPS35 subcomplex may be involved in recycling of specific cargos from endosome to the plasma membrane. The protein is Vacuolar protein sorting-associated protein 26A (VPS26A) of Arabidopsis thaliana (Mouse-ear cress).